A 2336-amino-acid polypeptide reads, in one-letter code: Voltage-dependent N-type calcium channel subunit alpha-1B (2336 aa).

The disordered stretch occupies residues 1–37 (MVRFGDELGGRYGGTGGGERARGGGAGGAGGPGQGGL). The Cytoplasmic portion of the chain corresponds to 1-90 (MVRFGDELGG…DNVVRKYAKR (90 aa)). The segment covering 10-37 (GRYGGTGGGERARGGGAGGAGGPGQGGL) has biased composition (gly residues). Arg-22 carries the omega-N-methylarginine modification. One copy of the I repeat lies at 82-359 (NVVRKYAKRI…LVLGVLSGEF (278 aa)). Residues 91–114 (ITEWPPFEYMILATIIANCIVLAL) form a helical membrane-spanning segment. Over 115–131 (EQHLPDGDKTPMSERLD) the chain is Extracellular. The helical transmembrane segment at 132–152 (DTEPYFIGIFCFEAGIKIIAL) threads the bilayer. The Cytoplasmic segment spans residues 153–163 (GFVFHKGSYLR). A helical membrane pass occupies residues 164–182 (NGWNVMDFVVVLTEILATA). Over 183–187 (GTDFD) the chain is Extracellular. A helical transmembrane segment spans residues 188 to 211 (LRTLRAVRVLRPLKLVSGIPSLQV). Residues 212 to 221 (VLKSIMKAMV) are Cytoplasmic-facing. A helical transmembrane segment spans residues 222–244 (PLLQIGLLLFFAILMFAIIGLEF). Topologically, residues 245–331 (YMGKFHKACF…NTNDAAGNTW (87 aa)) are extracellular. An N-linked (GlcNAc...) asparagine glycan is attached at Asn-256. A helical transmembrane segment spans residues 332–356 (NWLYFIPLIIIGSFFMLNLVLGVLS). The Cytoplasmic portion of the chain corresponds to 357–483 (GEFAKERERV…FLIRRMVKAQ (127 aa)). The binding to the beta subunit stretch occupies residues 379-396 (QQIERELNGYLEWIFKAE). Ser-411 is modified (phosphoserine). Position 452 to 459 (452 to 459 (ASLKSGKT)) interacts with ATP. The stretch at 469–713 (EKMFRFLIRR…VFLAIAVDNL (245 aa)) is one II repeat. Residues 484–502 (SFYWVVLCVVALNTLCVAM) traverse the membrane as a helical segment. Residues 503-512 (VHYNQPQRLT) are Extracellular-facing. Residues 513–535 (TALYFAEFVFLGLFLTEMSLKMY) form a helical membrane-spanning segment. Over 536 to 545 (GLGPRSYFRS) the chain is Cytoplasmic. Ser-545 lines the a 1,2-diacyl-sn-glycero-3-phospho-(1D-myo-inositol-4,5-bisphosphate) pocket. Residues 546 to 567 (SFNCFDFGVIVGSIFEVVWAAI) traverse the membrane as a helical segment. The Extracellular portion of the chain corresponds to 568 to 574 (KPGTSFG). The helical transmembrane segment at 575–587 (ISVLRALRLLRIF) threads the bilayer. Residues Arg-585 and Lys-588 each coordinate a 1,2-diacyl-sn-glycero-3-phospho-(1D-myo-inositol-4,5-bisphosphate). The Cytoplasmic portion of the chain corresponds to 588-605 (KVTKYWNSLRNLVVSLLN). A helical membrane pass occupies residues 606–631 (SMKSIISLLFLLFLFIVVFALLGMQL). The Extracellular segment spans residues 632–683 (FGGQFNFQDETPTTNFDTFPAAILTVFQILTGEDWNAVMYHGIESQGGVSKG). Residues 684–710 (MFSSFYFIVLTLFGNYTLLNVFLAIAV) traverse the membrane as a helical segment. Over 711 to 1149 (DNLANAQELT…FCHYIVTMRY (439 aa)) the chain is Cytoplasmic. A phosphoserine mark is found at Ser-746, Ser-749, and Ser-784. Disordered stretches follow at residues 800–1021 (YAST…HQPK) and 1051–1076 (EQPEDADNQRNVTRMGSQPSDPSTTV). Composition is skewed to basic and acidic residues over residues 806 to 827 (VRPDMKTHMDRPLVVEPGRDGL), 870 to 891 (EQDRTDCPKAESTETGAREERA), 920 to 930 (GSPEEATEREP), 938 to 948 (HAQDSSKEGKE), 970 to 981 (GPRETENSEEPT), and 996 to 1021 (PPEREVAEKESNVVEGDKETRNHQPK). Polar residues predominate over residues 1059–1076 (QRNVTRMGSQPSDPSTTV). Ser-1067 carries the post-translational modification Phosphoserine. Residues 1135–1421 (NLLRRFCHYI…IFVALIIITF (287 aa)) form an III repeat. The helical transmembrane segment at 1150 to 1168 (FEMVILVVIALSSIALAAE) threads the bilayer. Residues 1169-1176 (DPVRTDSF) lie on the Extracellular side of the membrane. Residues 1177–1201 (RNNALKYMDYIFTGVFTFEMVIKMI) form a helical membrane-spanning segment. The Cytoplasmic portion of the chain corresponds to 1202–1215 (DLGLLLHPGAYFRD). A helical transmembrane segment spans residues 1216–1240 (LWNILDFIVVSGALVAFAFSSFMGG). The Extracellular portion of the chain corresponds to 1241–1246 (SKGKDI). Residues 1247 to 1267 (NTIKSLRVLRVLRPLKTIKRL) traverse the membrane as a helical segment. Topologically, residues 1268-1285 (PKLKAVFDCVVNSLKNVL) are cytoplasmic. A helical transmembrane segment spans residues 1286–1305 (NILIVYMLFMFIFAVIAVQL). Residues 1306–1392 (FKGKFFYCTD…EQGPSPGFRM (87 aa)) are Extracellular-facing. The helical transmembrane segment at 1393-1418 (ELSIFYVVYFVVFPFFFVNIFVALII) threads the bilayer. The Cytoplasmic segment spans residues 1419-1473 (ITFQEQGDKVMSECSLEKNERACIDFAISAKPLTRYMPQNKQSFQYKTWTFVVSP). The stretch at 1458–1711 (NKQSFQYKTW…LFVAVIMDNF (254 aa)) is one IV repeat. A helical transmembrane segment spans residues 1474–1492 (PFEYFIMAMIALNTVVLMM). The Extracellular portion of the chain corresponds to 1493–1500 (KFYDAPYE). Residues 1501–1525 (YELMLKCLNIVFTSMFSLECILKII) traverse the membrane as a helical segment. Residues 1526-1535 (AFGVLNYFRD) are Cytoplasmic-facing. The chain crosses the membrane as a helical span at residues 1536-1557 (AWNVFDFVTVLGSITDILVTEI). The Extracellular segment spans residues 1558–1563 (ANNFIN). Asn-1563 carries an N-linked (GlcNAc...) asparagine glycan. The chain crosses the membrane as a helical span at residues 1564 to 1582 (LSFLRLFRAARLIKLCRQG). Over 1583–1601 (YTIRILLWTFVQSFKALPY) the chain is Cytoplasmic. A helical membrane pass occupies residues 1602 to 1621 (VCLLIAMLFFIYAIIGMQVF). The Extracellular portion of the chain corresponds to 1622–1683 (GNIALDDGTS…ANASECGSDF (62 aa)). The N-linked (GlcNAc...) asparagine glycan is linked to Asn-1675. A helical transmembrane segment spans residues 1684–1707 (AYFYFVSFIFLCSFLMLNLFVAVI). Residues 1708–2336 (MDNFEYLTRD…YHHPDQDHWC (629 aa)) lie on the Cytoplasmic side of the membrane. Positions 1724-1759 (HHLDEFIRVWAEYDPAACGRISYNDMFEMLKHMSPP) constitute an EF-hand domain. 3 residues coordinate Ca(2+): Asp-1737, Arg-1743, and Asp-1748. The tract at residues 1981–2202 (TLRGPDGEPQ…TPRPSITYKT (222 aa)) is disordered. The span at 2048 to 2062 (SHHHHHRCHRRRDKK) shows a compositional bias: basic residues. Ser-2065 is subject to Phosphoserine. Positions 2097–2113 (CRRERKQERGRSQERRQ) are enriched in basic and acidic residues. The span at 2161 to 2177 (GSGSVNGSPLMSTSGAS) shows a compositional bias: polar residues. Phosphoserine occurs at positions 2221, 2230, and 2253.

Belongs to the calcium channel alpha-1 subunit (TC 1.A.1.11) family. CACNA1B subfamily. Multisubunit complex consisting of alpha-1, alpha-2, beta and delta subunits in a 1:1:1:1 ratio. The channel activity is directed by the pore-forming and voltage-sensitive alpha-1 subunit. In many cases, this subunit is sufficient to generate voltage-sensitive calcium channel activity. The auxiliary subunits beta and alpha-2/delta linked by a disulfide bridge regulate the channel activity. Interacts with RIMS1. Interacts with FMR1 (via C-terminus); this interaction induces a decrease in the number of presynaptic functional CACNA1B channels at the cell surface. Phosphorylated in vitro by CaM-kinase II, PKA, PKC and CGPK. Central nervous system.

It localises to the membrane. The enzyme catalyses Ca(2+)(in) = Ca(2+)(out). Is specifically blocked by omega-conotoxin GVIA. Is specifically blocked by omega-conotoxin MVIIA (ziconotide). Is insensitive to dihydropyridines (DHP). Its function is as follows. Voltage-sensitive calcium channels (VSCC) mediate the entry of calcium ions into excitable cells and are also involved in a variety of calcium-dependent processes, including muscle contraction, hormone or neurotransmitter release, gene expression, cell motility, cell division and cell death. This alpha-1B subunit gives rise to N-type calcium currents. N-type calcium channels belong to the 'high-voltage activated' (HVA) group. They are involved in pain signaling. Calcium channels containing alpha-1B subunit may play a role in directed migration of immature neurons. Mediates Ca(2+) release probability at hippocampal neuronal soma and synaptic terminals. In Rattus norvegicus (Rat), this protein is Voltage-dependent N-type calcium channel subunit alpha-1B (Cacna1b).